The following is a 548-amino-acid chain: MDSQRNLLVIALLFVSFMIWQAWEQDKNPQPQTQQTTQTTTTAAGSAADQGVPASGQGKMITVKTDVLDLTINTRGGDVEQALLPAYPKELGSNEPFQLLETTPQFIYQAQSGLTGRGGPDNPANGPRPLYNVEKEAFVLADGQNELQVPMTYTDAAGNTFTKTFVFKRGDYAVNVNYSVQNAGEKPLEVSTFGQLKQSVNLPPHRDTGSSNFALHTFRGAAYSTPDEKYEKYKFDTIADNENLNVSSKGGWVAMLQQYFATAWIPRNDGTNNFYTANLGNGIVAIGYKAQPVLVQPGQTGAMTSTLWVGPEIQDKMAAVAPHLDLTVDYGWLWFISQPLFKLLKWIHSFVGNWGFSIIIITFIVRGIMYPLTKAQYTSMAKMRMLQPKIQAMRERLGDDKQRQSQEMMALYKAEKVNPLGGCFPLIIQMPIFLALYYMLMGSIELRHAPFALWIHDLSAQDPYYILPILMGVTMFFIQKMSPTTVTDPMQQKIMTFMPVIFTVFFLWFPSGLVLYYIVSNLVTIIQQQLIYRGLEKRGLHSREKKKS.

Residues 6–26 (NLLVIALLFVSFMIWQAWEQD) form a helical membrane-spanning segment. The disordered stretch occupies residues 28–56 (NPQPQTQQTTQTTTTAAGSAADQGVPASG). A compositionally biased stretch (low complexity) spans 29–42 (PQPQTQQTTQTTTT). 4 helical membrane-spanning segments follow: residues 350–370 (FVGNWGFSIIIITFIVRGIMY), 424–444 (FPLIIQMPIFLALYYMLMGSI), 458–478 (LSAQDPYYILPILMGVTMFFI), and 499–519 (PVIFTVFFLWFPSGLVLYYIV).

Belongs to the OXA1/ALB3/YidC family. Type 1 subfamily. As to quaternary structure, interacts with the Sec translocase complex via SecD. Specifically interacts with transmembrane segments of nascent integral membrane proteins during membrane integration.

Its subcellular location is the cell inner membrane. Required for the insertion and/or proper folding and/or complex formation of integral membrane proteins into the membrane. Involved in integration of membrane proteins that insert both dependently and independently of the Sec translocase complex, as well as at least some lipoproteins. Aids folding of multispanning membrane proteins. The chain is Membrane protein insertase YidC from Salmonella newport (strain SL254).